Here is a 212-residue protein sequence, read N- to C-terminus: MSLFDKKHLVTQADALPGRNTPMPIATLHAVNEHSMTNVPAGMEIAYFAMGCFWGVERLFWQLPGVYSTAAGYAGGYTPNPTYREVCSGQTGHAEAVRIVYDPAVIRYEQLLQIFWENHDPTQGMQQGNDHGTQYRSAIYPLTPEQSAAAHASRERFQSAMAAAGNHRPITTEITHATPFYYAEDEHQQYLHKNPYGYCGIGGIGVCLPPDA.

Residue Cys-52 is part of the active site.

The protein belongs to the MsrA Met sulfoxide reductase family.

The enzyme catalyses L-methionyl-[protein] + [thioredoxin]-disulfide + H2O = L-methionyl-(S)-S-oxide-[protein] + [thioredoxin]-dithiol. It catalyses the reaction [thioredoxin]-disulfide + L-methionine + H2O = L-methionine (S)-S-oxide + [thioredoxin]-dithiol. Its function is as follows. Has an important function as a repair enzyme for proteins that have been inactivated by oxidation. Catalyzes the reversible oxidation-reduction of methionine sulfoxide in proteins to methionine. This is Peptide methionine sulfoxide reductase MsrA from Salmonella schwarzengrund (strain CVM19633).